The primary structure comprises 261 residues: Zaragozic acid A biosynthesis cluster protein 8 (261 aa).

Residues 242–254 (GTRSHTPAATQRR) are compositionally biased toward polar residues. Positions 242 to 261 (GTRSHTPAATQRRGQGRGCG) are disordered.

It functions in the pathway secondary metabolite biosynthesis. Part of the gene cluster that mediates the biosynthesis of squalestatin S1 (SQS1, also known as zaragozic acid A), a heavily oxidized fungal polyketide that offers potent cholesterol lowering activity by targeting squalene synthase (SS). SQS1 is composed of a 2,8-dioxobicyclic[3.2.1]octane-3,4,5-tricarboxyclic acid core that is connected to two lipophilic polyketide arms. These initial steps feature the priming of an unusual benzoic acid starter unit onto the highly reducing polyketide synthase clz14, followed by oxaloacetate extension and product release to generate a tricarboxylic acid containing product. The phenylalanine ammonia lyase (PAL) clz10 and the acyl-CoA ligase clz12 are involved in transforming phenylalanine into benzoyl-CoA. The citrate synthase-like protein clz17 is involved in connecting the C-alpha-carbons of the hexaketide chain and oxaloacetate to afford the tricarboxylic acid unit. The potential hydrolytic enzymes, clz11 and clz13, are in close proximity to pks2 and may participate in product release. On the other side, the tetraketide arm is synthesized by a the squalestatin tetraketide synthase clz2 and enzymatically esterified to the core in the last biosynthetic step, by the acetyltransferase clz6. The biosynthesis of the tetraketide must involve 3 rounds of chain extension. After the first and second rounds methyl-transfer occurs, and in all rounds of extension the ketoreductase and dehydratase are active. The enoyl reductase and C-MeT of clz2 are not active in the final round of extension. The acetyltransferase clz6 appears to have a broad substrate selectivity for its acyl CoA substrate, allowing the in vitro synthesis of novel squalestatins. The biosynthesis of SQS1 requires several oxidative steps likely performed by oxidoreductases clz3, clz15 and clz16. Finally, in support of the identification of the cluster as being responsible for SQS1 production, the cluster contains a gene encoding a putative squalene synthase (SS) clz20, suggesting a likely mechanism for self-resistance. The polypeptide is Zaragozic acid A biosynthesis cluster protein 8 (Cochliobolus lunatus (Filamentous fungus)).